We begin with the raw amino-acid sequence, 614 residues long: Sodium- and chloride-dependent betaine transporter (614 aa).

Residues 1-44 (MDRKVTVHEDGCPVVSWVPEEGEMMDQKDKDQVKDRGQWTNKME) lie on the Cytoplasmic side of the membrane. 3 helical membrane passes run 45–65 (FVLSVAGEIIGLGNVWRFPYL), 73–92 (AFFIPYFIFFFSCGIPVFFL), and 117–137 (GIGMASVVIESYLNIYYIIIL). The Extracellular portion of the chain corresponds to 138–210 (AWALFYLFSS…SGIHDLGSLR (73 aa)). 2 N-linked (GlcNAc...) asparagine glycosylation sites follow: Asn171 and Asn183. Transmembrane regions (helical) follow at residues 211–229 (WELALCLLLAWIICYFCIW), 238–255 (VVYFTATFPYLMLIILLI), 291–308 (IFFSFAICQGCLTALGSY), 320–341 (IALCFLNSATSFVAGFVVFSIL), 374–393 (MPLSQLWSCLFFLMLLFLGL), 423–441 (LLILAVAIVCYLMGLLLVT), 458–478 (GICLLFLSLFEVICIGWVYGA), 499–518 (ISWLFLTPGLCLATFFFSLS), and 538–556 (IGWLLAFSSMACVPLFIII). Residues 557–614 (TLLKTQGSFKKRLQRLITPDPSLPQPGRRSPQDGSSAQNCSTSPVKQELIAWEKETHL) are Cytoplasmic-facing. A disordered region spans residues 574–600 (TPDPSLPQPGRRSPQDGSSAQNCSTSP). Ser586 carries the post-translational modification Phosphoserine. Polar residues predominate over residues 588 to 600 (QDGSSAQNCSTSP).

Belongs to the sodium:neurotransmitter symporter (SNF) (TC 2.A.22) family. SLC6A12 subfamily. In terms of assembly, interacts with LIN7C.

The protein localises to the basolateral cell membrane. It is found in the cell membrane. The enzyme catalyses 4-aminobutanoate(out) + chloride(out) + 3 Na(+)(out) = 4-aminobutanoate(in) + chloride(in) + 3 Na(+)(in). The catalysed reaction is glycine betaine(out) + 2 chloride(out) + 3 Na(+)(out) = glycine betaine(in) + 2 chloride(in) + 3 Na(+)(in). In terms of biological role, transporter that mediates cellular uptake of betaine and GABA in a sodium- and chloride-dependent process. May have a role in regulation of GABAergic transmission in the brain through the reuptake of GABA into presynaptic terminals, as well as in osmotic regulation. Probably also involved in renal and hepatic osmotic regulation. The chain is Sodium- and chloride-dependent betaine transporter (Slc6a12) from Rattus norvegicus (Rat).